We begin with the raw amino-acid sequence, 131 residues long: Biogenesis of lysosome-related organelles complex 1 subunit CNL1 (131 aa).

The tract at residues 1–29 (MSAPDSNSGHAHDSAQNEGAAEGTRDPFG) is disordered. The stretch at 73-101 (DAIDINIEEMRRILQKCEELETHFDMLDQ) forms a coiled coil.

This sequence belongs to the BLOC1S4 family. Component of the biogenesis of lysosome-related organelles complex-1 (BLOC-1).

Its subcellular location is the cytoplasm. In terms of biological role, component of the biogenesis of lysosome-related organelles complex-1 (BLOC-1), a complex that is involved in endosomal cargo sorting. The protein is Biogenesis of lysosome-related organelles complex 1 subunit CNL1 (CLN1) of Lachancea thermotolerans (strain ATCC 56472 / CBS 6340 / NRRL Y-8284) (Yeast).